A 419-amino-acid chain; its full sequence is UDP-N-acetylglucosamine 1-carboxyvinyltransferase (419 aa).

22-23 (KN) contacts phosphoenolpyruvate. Position 91 (R91) interacts with UDP-N-acetyl-alpha-D-glucosamine. C115 (proton donor) is an active-site residue. C115 carries the 2-(S-cysteinyl)pyruvic acid O-phosphothioketal modification. UDP-N-acetyl-alpha-D-glucosamine-binding positions include 120–124 (RPVDL), 160–163 (KVSV), D305, and I327.

The protein belongs to the EPSP synthase family. MurA subfamily.

The protein resides in the cytoplasm. It catalyses the reaction phosphoenolpyruvate + UDP-N-acetyl-alpha-D-glucosamine = UDP-N-acetyl-3-O-(1-carboxyvinyl)-alpha-D-glucosamine + phosphate. The protein operates within cell wall biogenesis; peptidoglycan biosynthesis. Its function is as follows. Cell wall formation. Adds enolpyruvyl to UDP-N-acetylglucosamine. In Tolumonas auensis (strain DSM 9187 / NBRC 110442 / TA 4), this protein is UDP-N-acetylglucosamine 1-carboxyvinyltransferase.